Consider the following 81-residue polypeptide: Large ribosomal subunit protein bL31 (81 aa).

Zn(2+) is bound by residues Cys16, Cys18, Cys38, and Cys41.

This sequence belongs to the bacterial ribosomal protein bL31 family. Type A subfamily. In terms of assembly, part of the 50S ribosomal subunit. Zn(2+) serves as cofactor.

Binds the 23S rRNA. In Mycobacterium marinum (strain ATCC BAA-535 / M), this protein is Large ribosomal subunit protein bL31.